Reading from the N-terminus, the 222-residue chain is Octanoyltransferase (222 aa).

One can recognise a BPL/LPL catalytic domain in the interval 35–214 (GTAPELIWLL…HLDGFLARLD (180 aa)). Substrate-binding positions include 73-80 (RGGRYTYH), 145-147 (AIG), and 158-160 (GFS). Cysteine 176 (acyl-thioester intermediate) is an active-site residue.

Belongs to the LipB family.

The protein localises to the cytoplasm. The enzyme catalyses octanoyl-[ACP] + L-lysyl-[protein] = N(6)-octanoyl-L-lysyl-[protein] + holo-[ACP] + H(+). It participates in protein modification; protein lipoylation via endogenous pathway; protein N(6)-(lipoyl)lysine from octanoyl-[acyl-carrier-protein]: step 1/2. Functionally, catalyzes the transfer of endogenously produced octanoic acid from octanoyl-acyl-carrier-protein onto the lipoyl domains of lipoate-dependent enzymes. Lipoyl-ACP can also act as a substrate although octanoyl-ACP is likely to be the physiological substrate. The protein is Octanoyltransferase of Novosphingobium aromaticivorans (strain ATCC 700278 / DSM 12444 / CCUG 56034 / CIP 105152 / NBRC 16084 / F199).